Reading from the N-terminus, the 171-residue chain is Galectin-related protein A (171 aa).

Residues 38-170 (PFCGHIKGGL…INGDLQLTKL (133 aa)) enclose the Galectin domain.

Functionally, does not bind lactose, and may not bind carbohydrates. The chain is Galectin-related protein A (lgalsl-a) from Xenopus laevis (African clawed frog).